A 735-amino-acid chain; its full sequence is Exocyst complex component 7 (735 aa).

2 coiled-coil regions span residues 5-42 (QEAS…TKNM) and 63-85 (VHKQ…SCLD). A Phosphoserine modification is found at Ser-133. The disordered stretch occupies residues 239–268 (HKSSSSSGVPYSPAIPNKRKDTPTKKPVKR).

It belongs to the EXO70 family. In terms of assembly, the exocyst complex is composed of EXOC1, EXOC2, EXOC3, EXOC4, EXOC5, EXOC6, EXOC7 and EXOC8. Interacts with ARHQ in a GTP-dependent manner. Interacts with RAB11FIP3. As to expression, abundant in the ventricular zone, the outer subventricular zone and the cortical plate of the fetal cortex.

It localises to the cytoplasm. Its subcellular location is the cytosol. The protein resides in the cell membrane. It is found in the midbody. The protein localises to the midbody ring. Functionally, component of the exocyst complex involved in the docking of exocytic vesicles with fusion sites on the plasma membrane. In adipocytes, plays a crucial role in targeting SLC2A4 vesicle to the plasma membrane in response to insulin, perhaps directing the vesicle to the precise site of fusion. It is required for neuron survival and plays an essential role in cortical development. The protein is Exocyst complex component 7 (EXOC7) of Homo sapiens (Human).